The following is a 768-amino-acid chain: Protein STRUBBELIG (768 aa).

An N-terminal signal peptide occupies residues 1 to 24 (MSFTRWEVFFGLSVLALTMPFSAG). The Extracellular portion of the chain corresponds to 25–341 (VTNLRDVSAI…GSGKFWSTQR (317 aa)). A disulfide bond links C57 and C66. A glycan (N-linked (GlcNAc...) asparagine) is linked at N70. LRR repeat units lie at residues 94–115 (SIQVMDFSSNHISGTIPQALPS), 116–139 (SIRNLSLSSNRFTGNIPFTLSFLS), 140–162 (DLSELSLGSNLLSGEIPDYFQQL), 164–186 (KLTKLDLSSNILEGHLPSSMGDL), 188–210 (SLKILYLQDNKLTGTLDVIEDLF), and 211–231 (LTDLNVENNLFSGPIPPNLLK). A glycan (N-linked (GlcNAc...) asparagine) is linked at N119. Residues 241 to 334 (PFNTSIITPP…ISPPSGSGSG (94 aa)) are disordered. An N-linked (GlcNAc...) asparagine glycan is attached at N243. 2 stretches are compositionally biased toward pro residues: residues 248–283 (TPPPPPVVDPPPATHRAPPVPRIPPVSGVPPAPFAP) and 291–301 (QHPPPSPPLVW). Polar residues predominate over residues 315–334 (NSVSGQPTLQISPPSGSGSG). The helical transmembrane segment at 342-362 (IILVVSSVAIIVLVSGLCVTL) threads the bilayer. Topologically, residues 363 to 768 (WRCCRSKIYN…EIVQDLQHMI (406 aa)) are cytoplasmic. The tract at residues 385-477 (PYFNKPPSQP…RAAHFPPGLN (93 aa)) is disordered. Over residues 439-464 (SYYNKDVNTPQKPLQQPPRQFQSNDT) the composition is skewed to polar residues. A Protein kinase domain is found at 497–768 (FSEENIIGEG…EIVQDLQHMI (272 aa)). Residues 503–511 (IGEGSIGNV) and K525 each bind ATP.

This sequence belongs to the protein kinase superfamily. Ser/Thr protein kinase family. In terms of assembly, interacts (via intra-cellular domain) with AN; this interaction is not required for correct subcellular localization and recycling of SUB. Binds to QKY and POQ at the plasma membrane. Binds to QKY at plasmodesmata (PD) in root epidermal cells to promote tissue morphogenesis. Expressed in leaves, stems, inflorescences, flower buds and developing root epidermis.

The protein resides in the cell membrane. It is found in the cell junction. Its subcellular location is the plasmodesma. With respect to regulation, regulated at the post-transcriptional level. Regulates the expression of transcription factors that define the cell fates. Acts in a non-cell-autonomous fashion, functions in a radial inside-out signaling process, and mediates cell morphogenesis and cell fate across clonally distinct cell layers in floral primordia, developing ovules, and root meristems. Seems to be required for the regulation of cell shape and the orientation of the mitotic division plane. Involved in root hair specification, in the formation of the outer integument and the shape of organs such as carpels and petals and is necessary for the shape and height of the stem. Non-functional SUB proteins are retained in the endoplasmic reticulum and degraded by endoplasmic reticulum-associated degradation (ERAD). Collaboratively with QKY and POQ, regulates cell growth anisotropy during gynoecium development, thus linking together cell-cell communication and cellular growth. Together with QKY, links RLK-dependent signal transduction and intercellular communication mediated by plasmodesmata (PD) to regulate tissue morphogenesis. The chain is Protein STRUBBELIG from Arabidopsis thaliana (Mouse-ear cress).